The following is a 268-amino-acid chain: 3-deoxy-manno-octulosonate cytidylyltransferase (268 aa).

Belongs to the KdsB family.

Its subcellular location is the cytoplasm. It catalyses the reaction 3-deoxy-alpha-D-manno-oct-2-ulosonate + CTP = CMP-3-deoxy-beta-D-manno-octulosonate + diphosphate. It functions in the pathway nucleotide-sugar biosynthesis; CMP-3-deoxy-D-manno-octulosonate biosynthesis; CMP-3-deoxy-D-manno-octulosonate from 3-deoxy-D-manno-octulosonate and CTP: step 1/1. It participates in bacterial outer membrane biogenesis; lipopolysaccharide biosynthesis. Activates KDO (a required 8-carbon sugar) for incorporation into bacterial lipopolysaccharide in Gram-negative bacteria. The polypeptide is 3-deoxy-manno-octulosonate cytidylyltransferase (Ralstonia pickettii (strain 12J)).